The following is a 175-amino-acid chain: 6,7-dimethyl-8-ribityllumazine synthase (175 aa).

5-amino-6-(D-ribitylamino)uracil is bound by residues F24, 58 to 60, and 82 to 84; these read ALE and AVI. 87–88 lines the (2S)-2-hydroxy-3-oxobutyl phosphate pocket; it reads ET. Residue H90 is the Proton donor of the active site. N115 serves as a coordination point for 5-amino-6-(D-ribitylamino)uracil. R129 is a binding site for (2S)-2-hydroxy-3-oxobutyl phosphate. The disordered stretch occupies residues 150-175; the sequence is ALEPEEDDEDEDDEDEDFDDEEDDGR. A compositionally biased stretch (acidic residues) spans 152–175; it reads EPEEDDEDEDDEDEDFDDEEDDGR.

Belongs to the DMRL synthase family.

The enzyme catalyses (2S)-2-hydroxy-3-oxobutyl phosphate + 5-amino-6-(D-ribitylamino)uracil = 6,7-dimethyl-8-(1-D-ribityl)lumazine + phosphate + 2 H2O + H(+). It participates in cofactor biosynthesis; riboflavin biosynthesis; riboflavin from 2-hydroxy-3-oxobutyl phosphate and 5-amino-6-(D-ribitylamino)uracil: step 1/2. Catalyzes the formation of 6,7-dimethyl-8-ribityllumazine by condensation of 5-amino-6-(D-ribitylamino)uracil with 3,4-dihydroxy-2-butanone 4-phosphate. This is the penultimate step in the biosynthesis of riboflavin. This is 6,7-dimethyl-8-ribityllumazine synthase from Bordetella bronchiseptica (strain ATCC BAA-588 / NCTC 13252 / RB50) (Alcaligenes bronchisepticus).